The following is a 282-amino-acid chain: 4-diphosphocytidyl-2-C-methyl-D-erythritol kinase (282 aa).

Lys-11 is an active-site residue. Residue 93–103 (LVSAGLAGGSA) participates in ATP binding. Residue Asp-133 is part of the active site.

The protein belongs to the GHMP kinase family. IspE subfamily.

It carries out the reaction 4-CDP-2-C-methyl-D-erythritol + ATP = 4-CDP-2-C-methyl-D-erythritol 2-phosphate + ADP + H(+). It functions in the pathway isoprenoid biosynthesis; isopentenyl diphosphate biosynthesis via DXP pathway; isopentenyl diphosphate from 1-deoxy-D-xylulose 5-phosphate: step 3/6. In terms of biological role, catalyzes the phosphorylation of the position 2 hydroxy group of 4-diphosphocytidyl-2C-methyl-D-erythritol. The sequence is that of 4-diphosphocytidyl-2-C-methyl-D-erythritol kinase from Ehrlichia chaffeensis (strain ATCC CRL-10679 / Arkansas).